The primary structure comprises 235 residues: Exosome complex component Rrp4 (235 aa).

Residues 63–137 (GDLVIGYVTD…DEYPIILTLK (75 aa)) form the S1 motif domain. The region spanning 147 to 203 (GTVVEITPVKVPRVIGKRGSMLNTLMELGCDIVVGQNGRIWVKCKDPRDEVFLASLI) is the KH domain.

The protein belongs to the RRP4 family. As to quaternary structure, component of the archaeal exosome complex. Forms a trimer of Rrp4 and/or Csl4 subunits. The trimer associates with a hexameric ring-like arrangement composed of 3 Rrp41-Rrp42 heterodimers.

It localises to the cytoplasm. Non-catalytic component of the exosome, which is a complex involved in RNA degradation. Increases the RNA binding and the efficiency of RNA degradation. Confers strong poly(A) specificity to the exosome. The chain is Exosome complex component Rrp4 from Pyrobaculum aerophilum (strain ATCC 51768 / DSM 7523 / JCM 9630 / CIP 104966 / NBRC 100827 / IM2).